Consider the following 263-residue polypeptide: MAPK-interacting and spindle-stabilizing protein (263 aa).

Residues 13–238 (GSPAPFLPSG…LGKQQGHNTT (226 aa)) form a disordered region. 2 stretches are compositionally biased toward pro residues: residues 14 to 34 (SPAP…PYPG) and 140 to 155 (GLQP…PPGP). A compositionally biased stretch (low complexity) spans 156–165 (SAASPGPGSL). A compositionally biased stretch (polar residues) spans 176-189 (PSDSSNPESTLEST). The segment covering 202 to 213 (IKRRRSKKKSKR) has biased composition (basic residues).

It belongs to the MISS family. Interacts with MAPK1. In terms of processing, phosphorylated in vitro by MAPK1.

The protein localises to the cytoplasm. It localises to the cytoskeleton. Its subcellular location is the spindle. In terms of biological role, involved in the maintenance of the spindle integrity during the cytostatic factor (CSF) arrest of oocytes. The sequence is that of MAPK-interacting and spindle-stabilizing protein (Mapk1ip1) from Mus musculus (Mouse).